The primary structure comprises 340 residues: MEF2 transcription factor homolog (340 aa).

The MADS-box domain maps to 1 to 61 (MGRKKIQITR…NKLFQYASTD (61 aa)). Disordered regions lie at residues 90 to 112 (RKEG…TSPV), 193 to 217 (NQRN…LDFP), 258 to 283 (LQQR…NGTS), and 312 to 340 (PNTY…QQLT). Low complexity predominate over residues 200–211 (SSTSVAPSSSSS). Over residues 258–268 (LQQRPVSQPAP) the composition is skewed to polar residues. A compositionally biased stretch (low complexity) spans 269-283 (SISNSSTNGISNGTS). Residues 318–332 (MEPHSPPEKRPRITT) show a composition bias toward basic and acidic residues.

It belongs to the MEF2 family. In terms of assembly, interacts with histone deacetylase hda-4 isoform b.

The protein resides in the nucleus. Functionally, transcription regulator. Binds specifically to the MEF2 element, 5'-[TC]TA[AT][AT][AT][AT]TA[AG]-3' in the regulatory elements of target genes, such as chemoreceptors str-1 and srh-234. Involved in transduction of sensory signals, together with egl-4, kin-29 and hda-4; binding to histone deacetylase hda-4 enables negative modulation of chemoreceptor gene expression in chemosensory neurons. In response to starvation, negatively modulates expression of chemoreceptor srh-234 in ADL sensory neurons, acting in concert with basic helix-loop-helix (bHLH) transcription factors. Plays a role in regulating muscle sensitivity to acetylcholine (ACh) and the magnitude of presynaptic ACh release via a retrograde signal, perhaps by indirectly decreasing Ras-related protein Rab-3 activity. The protein is MEF2 transcription factor homolog of Caenorhabditis elegans.